The sequence spans 328 residues: D-cysteine desulfhydrase (328 aa).

K51 carries the N6-(pyridoxal phosphate)lysine modification.

Belongs to the ACC deaminase/D-cysteine desulfhydrase family. In terms of assembly, homodimer. The cofactor is pyridoxal 5'-phosphate.

The enzyme catalyses D-cysteine + H2O = hydrogen sulfide + pyruvate + NH4(+) + H(+). Functionally, catalyzes the alpha,beta-elimination reaction of D-cysteine and of several D-cysteine derivatives. It could be a defense mechanism against D-cysteine. The protein is D-cysteine desulfhydrase of Salmonella typhi.